Consider the following 938-residue polypeptide: MSDYKKTLNLPQTAFPMKANLAQREPEAIKKWEAANACAAMVEASGSEGTYILHDGPPYANGHLHMGHALNKILKDIIVKSRNMAGYASWYVPGWDCHGLPIEHKVEQDLKEKKKSLPAHVVRKLCREYANKWLDVQRKEFKRLGVLGDWDHPYISMDPAYEAVTAGELAKFVAAGGVARAKKPIYWCCSCHTALAEAEVEYNDHTSPSVYVRFALPDEGLKKVFAAADPARAHVVIWTTTPWTLPDNMAVCLHPEFTYALVEAEGSQYILAEELVASCAETFGWSEYTILDRATGERLEGLKARHPFYDRQSSLVLGLHVTLDAGTGCVHTAPGHGREDYDVALKYGLEIYSPMDDAGRFLPAVEFFAGLNVFEANPKVVEKLEEVGALLQKGKIRHSYPHCWRCKEPVIFRATTQWFISMEKNDLRTRALKAIDEEVRWIPAWGRERIHNMVEFRPDWCISRQRQWGVPILALLCEDCGEAWNDPAWMQEIAARFAKHPTGCDYWYEAELKDVVPEGLACPHCGGNHWKRETDILDVWFDSGTSFAAVLEKRPELGFPADLYLEGSDQHRGWFHSSLLVSEGTRGCAPYRAVLTHGYVVDGDGRKMSKSVGNVIAPQELIEKFGAEIVRLWVSSVEYREDIRLSDEILGRLVDAYRRIRNTCRFIMGNLSDITAHDLLSLDRLQPLDRFALDVAGRVHERVQQAYMDFDFHKVYHTLHNYCVTDLSSVYLDILKDRLYASAPHSDERRSAQTALWHILCLLLRDMAPVLSFTAEEIFSHLPESLRGPETTVFALPPLAAAPYLLDEGTRDDWNVLLAVRGAVTKAIEPMRREGIIGHSLDTRITLFVADELRQRLEGLHTDLRAVCIVSQLHLEALDRAPQAAYRDEEVAGLAIGVEKARGEKCERCWIYSTELGSDASHPALCPRCTAVIKGMES.

Residues 58–68 (PYANGHLHMGH) carry the 'HIGH' region motif. Glu-566 contacts L-isoleucyl-5'-AMP. Positions 607–611 (KMSKS) match the 'KMSKS' region motif. Residue Lys-610 coordinates ATP. Residues Cys-906, Cys-909, Cys-926, and Cys-929 each contribute to the Zn(2+) site.

This sequence belongs to the class-I aminoacyl-tRNA synthetase family. IleS type 1 subfamily. In terms of assembly, monomer. The cofactor is Zn(2+).

Its subcellular location is the cytoplasm. The catalysed reaction is tRNA(Ile) + L-isoleucine + ATP = L-isoleucyl-tRNA(Ile) + AMP + diphosphate. Functionally, catalyzes the attachment of isoleucine to tRNA(Ile). As IleRS can inadvertently accommodate and process structurally similar amino acids such as valine, to avoid such errors it has two additional distinct tRNA(Ile)-dependent editing activities. One activity is designated as 'pretransfer' editing and involves the hydrolysis of activated Val-AMP. The other activity is designated 'posttransfer' editing and involves deacylation of mischarged Val-tRNA(Ile). The protein is Isoleucine--tRNA ligase of Desulfovibrio desulfuricans (strain ATCC 27774 / DSM 6949 / MB).